We begin with the raw amino-acid sequence, 217 residues long: MSSKPSDILDEVTLYAHYGLSVAKKLGMNMVDAFRAAFSVNDDIRQVYYRDKGISHAKAGRYSQAVMLLEQVYDADAFDVDVALHLGIAYVKTGAVDRGTELLERSLADAPDNVKVATVLGLTYVQVQKYDLAVPLLIKVAEANPINFNVRFRLGVALDNLGRFDEAIDSFKIALGLRPNEGKVHRAIAFSYEQMGRHEEALPHFKKANELDEGASV.

TPR repeat units follow at residues 12–44 (VTLYAHYGLSVAKKLGMNMVDAFRAAFSVNDDI), 46–79 (QVYYRDKGISHAKAGRYSQAVMLLEQVYDADAFD), 80–113 (VDVALHLGIAYVKTGAVDRGTELLERSLADAPDN), 114–147 (VKVATVLGLTYVQVQKYDLAVPLLIKVAEANPIN), 148–181 (FNVRFRLGVALDNLGRFDEAIDSFKIALGLRPNE), and 182–215 (GKVHRAIAFSYEQMGRHEEALPHFKKANELDEGA). Residues 41-112 (NDDIRQVYYR…LERSLADAPD (72 aa)) form an N-terminal domain (NTD) region. Residues 113–217 (NVKVATVLGL…ANELDEGASV (105 aa)) are C-terminal domain (CTD).

It belongs to the magnetosome MamA family. As to quaternary structure, oligomerizes into high molecular weight complexes (at least 560 kDa). Forms round, 20 nm diameter complexes with a central cavity. Interacts with full-length Mms6. Probably binds MamC.

It localises to the magnetosome membrane. Functionally, probably forms a large homooligomer on which other magnetosome subunits assemble. Required for formation of functional magnetosomes from pre-existing vesicles, it has a dynamic location in the cell. The sequence is that of Magnetosome protein MamA from Paramagnetospirillum magneticum (strain ATCC 700264 / AMB-1) (Magnetospirillum magneticum).